The sequence spans 471 residues: Extracellular endo-alpha-(1-&gt;5)-L-arabinanase (471 aa).

The N-terminal stretch at 1–19 (MRFLFLMITLTALTGYILA) is a signal peptide. Catalysis depends on Asp32, which acts as the Proton acceptor. Residues Asp32, Gly117, 167–170 (NALD), 187–189 (SWF), and 219–223 (HSSME) each bind substrate. Glu223 (proton donor) is an active-site residue. Residue His314 coordinates Ca(2+).

Belongs to the glycosyl hydrolase 43 family. Monomer. The cofactor is Ca(2+).

It localises to the secreted. It carries out the reaction Endohydrolysis of (1-&gt;5)-alpha-arabinofuranosidic linkages in (1-&gt;5)-arabinans.. It functions in the pathway glycan metabolism; L-arabinan degradation. Functionally, involved in the degradation of arabinan and is a key enzyme in the complete degradation of the plant cell wall. Catalyzes the internal cleavage of alpha-(1-&gt;5)-L-arabinofuranosyl residues in different arabinan-containing polysaccharides, and releases arabinotriose and arabinobiose as end products. It acts on branched arabinan (from sugar beet), but more slowly when compared to linear or debranched arabinan. The sequence is that of Extracellular endo-alpha-(1-&gt;5)-L-arabinanase from Thermotoga petrophila (strain ATCC BAA-488 / DSM 13995 / JCM 10881 / RKU-1).